The primary structure comprises 1486 residues: Chromosome partition protein MukB (1486 aa).

Residue 34 to 41 (GGNGAGKS) coordinates ATP. Coiled-coil stretches lie at residues 326-418 (LEAD…QYNQ), 444-480 (LETF…QAYQ), and 509-603 (RHLA…RAPV). The interval 666-783 (PGGSEDQRLN…EVPLFGRAAR (118 aa)) is flexible hinge. Coiled-coil stretches lie at residues 835-923 (EAEI…AKLE), 977-1115 (EMLS…TAKA), and 1209-1266 (VEAI…QNVS).

This sequence belongs to the SMC family. MukB subfamily. As to quaternary structure, homodimerization via its hinge domain. Binds to DNA via its C-terminal region. Interacts, and probably forms a ternary complex, with MukE and MukF via its C-terminal region. The complex formation is stimulated by calcium or magnesium. Interacts with tubulin-related protein FtsZ.

Its subcellular location is the cytoplasm. The protein localises to the nucleoid. Functionally, plays a central role in chromosome condensation, segregation and cell cycle progression. Functions as a homodimer, which is essential for chromosome partition. Involved in negative DNA supercoiling in vivo, and by this means organize and compact chromosomes. May achieve or facilitate chromosome segregation by condensation DNA from both sides of a centrally located replisome during cell division. The chain is Chromosome partition protein MukB from Escherichia coli O6:K15:H31 (strain 536 / UPEC).